We begin with the raw amino-acid sequence, 214 residues long: Imidazole glycerol phosphate synthase subunit HisH 2 (214 aa).

One can recognise a Glutamine amidotransferase type-1 domain in the interval Lys-2–Gly-210. Cys-82 acts as the Nucleophile in catalysis. Catalysis depends on residues His-185 and Glu-187.

Heterodimer of HisH and HisF.

Its subcellular location is the cytoplasm. The catalysed reaction is 5-[(5-phospho-1-deoxy-D-ribulos-1-ylimino)methylamino]-1-(5-phospho-beta-D-ribosyl)imidazole-4-carboxamide + L-glutamine = D-erythro-1-(imidazol-4-yl)glycerol 3-phosphate + 5-amino-1-(5-phospho-beta-D-ribosyl)imidazole-4-carboxamide + L-glutamate + H(+). The enzyme catalyses L-glutamine + H2O = L-glutamate + NH4(+). It participates in amino-acid biosynthesis; L-histidine biosynthesis; L-histidine from 5-phospho-alpha-D-ribose 1-diphosphate: step 5/9. Its function is as follows. IGPS catalyzes the conversion of PRFAR and glutamine to IGP, AICAR and glutamate. The HisH subunit provides the glutamine amidotransferase activity that produces the ammonia necessary to HisF for the synthesis of IGP and AICAR. The protein is Imidazole glycerol phosphate synthase subunit HisH 2 (hisH2) of Vibrio vulnificus (strain YJ016).